A 326-amino-acid polypeptide reads, in one-letter code: Porin-like protein H (326 aa).

Positions 1 to 19 are cleaved as a signal peptide; it reads MKKTLVALAILTAAGSANA.

Belongs to the Gram-negative porin family. As to quaternary structure, oligomer.

The protein localises to the cell outer membrane. Functionally, forms pores that allow passive diffusion of small molecules across the outer membrane. The sequence is that of Porin-like protein H (ompH) from Photobacterium profundum (strain SS9).